Consider the following 314-residue polypeptide: Acetaldehyde dehydrogenase 1/2 (314 aa).

12–15 (SGNI) serves as a coordination point for NAD(+). Catalysis depends on Cys-130, which acts as the Acyl-thioester intermediate. Residues 161–169 (SAGPGTRAN) and Asn-288 contribute to the NAD(+) site.

The protein belongs to the acetaldehyde dehydrogenase family.

The catalysed reaction is acetaldehyde + NAD(+) + CoA = acetyl-CoA + NADH + H(+). This Rhizorhabdus wittichii (strain DSM 6014 / CCUG 31198 / JCM 15750 / NBRC 105917 / EY 4224 / RW1) (Sphingomonas wittichii) protein is Acetaldehyde dehydrogenase 1/2.